The following is a 408-amino-acid chain: Acetate kinase (408 aa).

Asn-7 serves as a coordination point for Mg(2+). Lys-14 contributes to the ATP binding site. Arg-91 is a substrate binding site. Asp-148 acts as the Proton donor/acceptor in catalysis. ATP is bound by residues 208–212 (HLGNG) and 283–285 (DLR). A Mg(2+)-binding site is contributed by Glu-388.

Belongs to the acetokinase family. Homodimer. Mg(2+) serves as cofactor. Requires Mn(2+) as cofactor.

The protein resides in the cytoplasm. It carries out the reaction acetate + ATP = acetyl phosphate + ADP. The protein operates within metabolic intermediate biosynthesis; acetyl-CoA biosynthesis; acetyl-CoA from acetate: step 1/2. Catalyzes the formation of acetyl phosphate from acetate and ATP. Can also catalyze the reverse reaction. The protein is Acetate kinase of Borrelia hermsii (strain HS1 / DAH).